The chain runs to 102 residues: Acid shock protein (102 aa).

A signal peptide spans 1-21 (MKKVLALVVAAAMGLSSAAFA). The segment covering 22-41 (AETATTPAPTATTTKAAPAK) has biased composition (low complexity). Residues 22 to 58 (AETATTPAPTATTTKAAPAKTTHHKKQHKAAPAQKAQ) constitute a propeptide that is removed on maturation. The disordered stretch occupies residues 22–102 (AETATTPAPT…PAKPAAQPAA (81 aa)). The span at 80–90 (AAKKHAKKHSH) shows a compositional bias: basic residues. Residues 91 to 102 (QQPAKPAAQPAA) are compositionally biased toward low complexity.

It belongs to the Asr family. Proteolytic processing gives rise to the active protein.

It localises to the periplasm. Functionally, required for growth and/or survival at acidic conditions. In Escherichia coli O157:H7, this protein is Acid shock protein (asr).